The following is a 320-amino-acid chain: Putative sporulation hydrolase CotR (320 aa).

Residues 7 to 182 (MTFDGGGTLG…VATNPSTASI (176 aa)) enclose the PNPLA domain. Residues 11–16 (GGGTLG) carry the GXGXXG motif. A GXSXG motif is present at residues 42-46 (GNSIG). Ser44 (nucleophile) is an active-site residue. Asp169 acts as the Proton acceptor in catalysis.

The protein resides in the spore coat. In Bacillus subtilis (strain 168), this protein is Putative sporulation hydrolase CotR (cotR).